A 173-amino-acid polypeptide reads, in one-letter code: Transmembrane protein 240 (173 aa).

2 helical membrane passes run 5–25 (ANTM…ACLM) and 90–110 (LMLG…MDGV). Position 169 is a phosphoserine (Ser169).

Its subcellular location is the synapse. The protein localises to the cell membrane. This chain is Transmembrane protein 240 (Tmem240), found in Mus musculus (Mouse).